The chain runs to 454 residues: MTKREAEELIEIEIDGTEKAECTEESIVEQTYTPAECVSQAIDINEPIGNLKKLLEPRLQCSLDAHEICLQDIQLDPDRSLFDQGVKTDGTVQLSVQVISYQGMEPKLNILEIVKTAETVEVVIDPDAHHAEAEAHLVEEAQVITLDGTKHITTISDETSEQVTRWAAALEGYRKEQERLGIPYDPIHWSTDQVLHWVVWVMKEFSMTDIDLTTLNISGRELCSLNQEDFFQRVPRGEILWSHLELLRKYVLASQEQQMNEIVTIDQPVQIIPASVPPATPTTIKVINSSAKAAKVQRSPRISGEDRSSPGNRTGNNGQIQLWQFLLELLTDKDARDCISWVGDEGEFKLNQPELVAQKWGQRKNKPTMNYEKLSRALRYYYDGDMICKVQGKRFVYKFVCDLKTLIGYSAAELNRLVIECEQKKLARMQLHGIAQPVTAVALAATSLQADKEI.

A PNT domain is found at 168–251; sequence AALEGYRKEQ…SHLELLRKYV (84 aa). Residues 295-316 are disordered; that stretch reads KVQRSPRISGEDRSSPGNRTGN. Residue S303 is modified to Phosphoserine. The ETS DNA-binding region spans 320 to 400; the sequence is IQLWQFLLEL…QGKRFVYKFV (81 aa).

Belongs to the ETS family. As to quaternary structure, heterotetramer of two alpha and two beta subunits. As to expression, ubiquitous.

The protein localises to the nucleus. Its function is as follows. Transcription factor capable of interacting with purine rich repeats (GA repeats). Positively regulates transcription of transcriptional repressor Rhit/Zpf13. This chain is GA-binding protein alpha chain (Gabpa), found in Mus musculus (Mouse).